Reading from the N-terminus, the 397-residue chain is Nuclear pore complex-interacting protein family member B2 (397 aa).

The segment at 256-397 is disordered; it reads NRMGHQPPPP…KLRTGHCTQA (142 aa). Positions 267–277 are enriched in polar residues; it reads QQHSITDNSLS. Over residues 278–287 the composition is skewed to low complexity; the sequence is LKTPPECLLT. Positions 382–391 are enriched in basic residues; the sequence is KRRRLSKLRT.

Belongs to the NPIP family.

The protein resides in the nucleus. This is Nuclear pore complex-interacting protein family member B2 from Homo sapiens (Human).